A 437-amino-acid polypeptide reads, in one-letter code: Mannan endo-1,4-beta-mannosidase A (437 aa).

The signal sequence occupies residues 1–19 (MMMLSKSLLSAATAASALA). The propeptide occupies 20–27 (AVLQPVPR). The segment at 28–376 (ASSFVTISGT…VDAINGGTTT (349 aa)) is catalytic. Cys53 and Cys56 are disulfide-bonded. Residues Asn157 and Asn184 are each glycosylated (N-linked (GlcNAc...) asparagine). The Proton donor/acceptor role is filled by Glu196. 196-198 (EPR) contacts substrate. A disulfide bond links Cys199 and Cys202. Glu232 and Trp274 together coordinate substrate. Asn277 carries an N-linked (GlcNAc...) asparagine glycan. The cysteines at positions 292 and 299 are disulfide-linked. Catalysis depends on Glu303, which acts as the Nucleophile. A disulfide bond links Cys311 and Cys361. N-linked (GlcNAc...) asparagine glycosylation is present at Asn355. The segment at 372 to 399 (GGTTTPPPVSSTTTTSSRTSSTPPPPGG) is disordered. Residues 377-399 (PPPVSSTTTTSSRTSSTPPPPGG) are linker. The segment covering 381-392 (SSTTTTSSRTSS) has biased composition (low complexity). A CBM1 domain is found at 400-435 (SCSPLYGQCGGSGYTGPTCCAQGTCIYSNYWYSQCL).

The protein belongs to the glycosyl hydrolase 5 (cellulase A) family. Monomer.

It is found in the secreted. It carries out the reaction Random hydrolysis of (1-&gt;4)-beta-D-mannosidic linkages in mannans, galactomannans and glucomannans.. Endo-1,4-mannanase that catalyzes the random hydrolysis of (1-&gt;4)-beta-D-mannosidic linkages in mannans and heteromannans. It is a crucial enzyme for depolymerization of seed galactomannans and wood galactoglucomannans. Active against locust bean gum and ivory nut mannan, releasing mainly tri- and disaccharides. Also has transglycosylation activity. Transglycosylation of two mannotrioses into a mannohexaose is the major transglycosylation route. This Hypocrea jecorina (strain ATCC 56765 / BCRC 32924 / NRRL 11460 / Rut C-30) (Trichoderma reesei) protein is Mannan endo-1,4-beta-mannosidase A.